Consider the following 517-residue polypeptide: Apolipoprotein N-acyltransferase (517 aa).

The next 7 helical transmembrane spans lie at 5–25, 26–46, 55–75, 90–110, 128–148, 162–182, and 193–213; these read SFFS…ATLT, FAPY…LWLL, GLIG…WVHV, FLMS…GALF, VIWL…PWLW, APIL…GALV, and LMVP…SWVV. In terms of domain architecture, CN hydrolase spans 225 to 471; that stretch reads IQGNVPQELK…TAVLRATITP (247 aa). The Proton acceptor role is filled by Glu264. Lys330 is an active-site residue. Cys382 (nucleophile) is an active-site residue.

It belongs to the CN hydrolase family. Apolipoprotein N-acyltransferase subfamily.

It is found in the cell inner membrane. The enzyme catalyses N-terminal S-1,2-diacyl-sn-glyceryl-L-cysteinyl-[lipoprotein] + a glycerophospholipid = N-acyl-S-1,2-diacyl-sn-glyceryl-L-cysteinyl-[lipoprotein] + a 2-acyl-sn-glycero-3-phospholipid + H(+). It functions in the pathway protein modification; lipoprotein biosynthesis (N-acyl transfer). In terms of biological role, catalyzes the phospholipid dependent N-acylation of the N-terminal cysteine of apolipoprotein, the last step in lipoprotein maturation. The polypeptide is Apolipoprotein N-acyltransferase (Photobacterium profundum (strain SS9)).